The chain runs to 338 residues: Ferrochelatase (338 aa).

2 residues coordinate Fe cation: His-202 and Glu-283.

Belongs to the ferrochelatase family.

The protein localises to the cytoplasm. It carries out the reaction heme b + 2 H(+) = protoporphyrin IX + Fe(2+). It participates in porphyrin-containing compound metabolism; protoheme biosynthesis; protoheme from protoporphyrin-IX: step 1/1. Catalyzes the ferrous insertion into protoporphyrin IX. This Acinetobacter baumannii (strain AB307-0294) protein is Ferrochelatase.